The sequence spans 207 residues: Large ribosomal subunit protein uL4 (207 aa).

This sequence belongs to the universal ribosomal protein uL4 family. As to quaternary structure, part of the 50S ribosomal subunit.

In terms of biological role, one of the primary rRNA binding proteins, this protein initially binds near the 5'-end of the 23S rRNA. It is important during the early stages of 50S assembly. It makes multiple contacts with different domains of the 23S rRNA in the assembled 50S subunit and ribosome. Forms part of the polypeptide exit tunnel. This chain is Large ribosomal subunit protein uL4, found in Rickettsia conorii (strain ATCC VR-613 / Malish 7).